Reading from the N-terminus, the 798-residue chain is Suppressor of spindle checkpoint defect 1 (798 aa).

Positions 339–359 form a coiled coil; the sequence is ESIQQSQVNVDDMCNRIANME.

Belongs to the APC5 family. The APC/C complex is probably composed of at least 12 subunits: apc-2, apc-10, apc-11, cdc-26, emb-1, emb-27, emb-30, mat-1, mat-2, mat-3, such-1 and gfi-3. As to expression, expressed in head neurons, vulval precursor cells and in mature sperm stored in the spermatheca.

The protein operates within protein modification; protein ubiquitination. Its function is as follows. Probable component of the anaphase promoting complex/cyclosome (APC/C), a cell cycle-regulated E3 ubiquitin ligase that controls progression through mitosis and the G1 phase of the cell cycle. The APC/C complex acts by mediating ubiquitination and subsequent degradation of target proteins. Required for the metaphase to anaphase transition in meiosis. Plays a role in the segregation of DNA and centrioles during meiosis in male germ cells. The chain is Suppressor of spindle checkpoint defect 1 from Caenorhabditis elegans.